The following is a 244-amino-acid chain: MASRLAKSAICAARVRPVLSSRTIPAAATTLTSTRSVSNVPTEDPKTKAQSIIDALPGNSLVSKTAILSAGAGLSIAAISNELYVFSEETVAAFCLLSVFAGVAKMAGPMYKEWAETQIQKQKDILNGARANHTNAVKQRIENVKQLSGVVDITKALFEVSKETARLEAQAYELEQRTALAAEAKKVLDSWVQYEGQVKVRQQRELAQTVISKVQKELENPKVIQQILQQSVTDVERIFAAKPQ.

Residues 1–36 (MASRLAKSAICAARVRPVLSSRTIPAAATTLTSTRS) constitute a mitochondrion transit peptide.

The protein belongs to the eukaryotic ATPase B chain family. As to quaternary structure, F-type ATPases have 2 components, CF(1) - the catalytic core - and CF(0) - the membrane proton channel. In yeast, the dimeric form of ATP synthase consists of 17 polypeptides: alpha, beta, gamma, delta, epsilon, 4 (B), 5 (OSCP), 6 (A), 8, 9 (C), d, E (Tim11), f, g, h, i/j and k.

It is found in the mitochondrion. The protein localises to the mitochondrion inner membrane. Mitochondrial membrane ATP synthase (F(1)F(0) ATP synthase or Complex V) produces ATP from ADP in the presence of a proton gradient across the membrane which is generated by electron transport complexes of the respiratory chain. F-type ATPases consist of two structural domains, F(1) - containing the extramembraneous catalytic core, and F(0) - containing the membrane proton channel, linked together by a central stalk and a peripheral stalk. During catalysis, ATP synthesis in the catalytic domain of F(1) is coupled via a rotary mechanism of the central stalk subunits to proton translocation. Part of the complex F(0) domain and the peripheric stalk, which acts as a stator to hold the catalytic alpha(3)beta(3) subcomplex and subunit a/ATP6 static relative to the rotary elements. The protein is ATP synthase subunit 4, mitochondrial (ATP4) of Paracoccidioides brasiliensis.